Reading from the N-terminus, the 429-residue chain is MPAIVIVGAQWGDEGKGKATDLLGGRVDYVVKPNGGNNAGHTVVVGGEKYELKLLPAGILSPNAIPIIGNGCVVNLEALFQEIDGLEARGADTSRLRVSANAHLVAPYHQVLDKVTERFLGSRAIGTTGRGIGPAYMDKVARLGIRVQDVFDESILRQKVEGSLRQKNELLVKVYNRRDIIADEIVEYFLSFAERLRPLVIDSTLELNNALDEGKVVLMEGGQATFLDVDHGTYPFVTSSNPTAGGASVGSGIGPTRISRSIGIIKAYTTRVGAGPFPTELFDEMGVYLQKTGGEFGVNTGRPRRCGWYDAVLARHASRVNGFTDYFVTKLDVLTGIEQIPVCVAYDVDGVRHDEMPMTQTEFHHAVPIFEYFDGWTEDITGARTLEDLPENARNYVLALEKLSGTRFSAIGVGPDRDQTIVVHDLIND.

GTP is bound by residues 12-18 and 40-42; these read GDEGKGK and GHT. The Proton acceptor role is filled by aspartate 13. Mg(2+) contacts are provided by aspartate 13 and glycine 40. Residues 13–16, 38–41, threonine 128, arginine 142, glutamine 223, threonine 238, and arginine 302 each bind IMP; these read DEGK and NAGH. Histidine 41 acts as the Proton donor in catalysis. Residue 298-304 coordinates substrate; it reads VNTGRPR. GTP-binding positions include arginine 304, 330-332, and 412-414; these read KLD and GVG.

The protein belongs to the adenylosuccinate synthetase family. Homodimer. Mg(2+) serves as cofactor.

It is found in the cytoplasm. The enzyme catalyses IMP + L-aspartate + GTP = N(6)-(1,2-dicarboxyethyl)-AMP + GDP + phosphate + 2 H(+). The protein operates within purine metabolism; AMP biosynthesis via de novo pathway; AMP from IMP: step 1/2. Functionally, plays an important role in the de novo pathway of purine nucleotide biosynthesis. Catalyzes the first committed step in the biosynthesis of AMP from IMP. The protein is Adenylosuccinate synthetase of Paenarthrobacter aurescens (strain TC1).